The primary structure comprises 258 residues: Isoprenyl transferase (258 aa).

Asp38 is a catalytic residue. A Mg(2+)-binding site is contributed by Asp38. Substrate contacts are provided by residues 39-42, Trp43, Arg51, His55, and 83-85; these read GNGR and STE. Asn86 serves as the catalytic Proton acceptor. Substrate-binding positions include Trp87, Arg89, Arg206, and 212-214; that span reads RIS. Glu225 contacts Mg(2+).

Belongs to the UPP synthase family. As to quaternary structure, homodimer. Mg(2+) serves as cofactor.

Functionally, catalyzes the condensation of isopentenyl diphosphate (IPP) with allylic pyrophosphates generating different type of terpenoids. This chain is Isoprenyl transferase, found in Bacillus cereus (strain ATCC 14579 / DSM 31 / CCUG 7414 / JCM 2152 / NBRC 15305 / NCIMB 9373 / NCTC 2599 / NRRL B-3711).